The primary structure comprises 461 residues: Lysosomal proton-coupled steroid conjugate and bile acid symporter SLC46A3 (461 aa).

The N-terminal stretch at 1–25 is a signal peptide; sequence MKISFIEPAILLYAFAMTLTIPLTA. The Extracellular segment spans residues 26–70; sequence QYVYRRIWEETGNYTFTSSSNVSECEQNKSSSTFAFQEEVQKKAS. N-linked (GlcNAc...) asparagine glycosylation is found at Asn-38, Asn-46, and Asn-53. The helical transmembrane segment at 71 to 91 threads the bilayer; it reads LFSLQVEISGLIPGLVSTFML. The Cytoplasmic portion of the chain corresponds to 92-103; sequence LSSSDNHGRKLP. A helical membrane pass occupies residues 104–124; that stretch reads MVLSSLGSLGTNLWLCAMSYF. Residues 125 to 135 are Extracellular-facing; it reads DLPLQLLVAST. The chain crosses the membrane as a helical span at residues 136 to 156; it reads FIGALFGNYTTFWGACFAYIV. Residues 157–170 lie on the Cytoplasmic side of the membrane; sequence DQEKEYKHRIIRIA. A helical transmembrane segment spans residues 171-191; it reads VLDFMLGVVTGLTGLSSGYFI. The Extracellular segment spans residues 192–197; the sequence is RELGFA. Residues 198–218 form a helical membrane-spanning segment; the sequence is WSYFIIAVVVLVNLAYILFFL. At 219–260 the chain is on the cytoplasmic side; sequence SDPIKESSSQIVTMSCSESLKDLFYRTYMLFKNGSCKRRSLL. The chain crosses the membrane as a helical span at residues 261 to 281; the sequence is CLLIFTLVVYFFVVFGITPVF. At 282 to 301 the chain is on the extracellular side; that stretch reads TLYELGPPLCWNEVYIGYGS. The helical transmembrane segment at 302 to 322 threads the bilayer; it reads ALGSLSFLSSFLGIWLFSYCL. Residues 323–324 are Cytoplasmic-facing; it reads KD. A helical transmembrane segment spans residues 325–345; it reads IHIAYVGIFTTMVGMMLTAFT. Residues 346–347 are Extracellular-facing; the sequence is RT. A helical membrane pass occupies residues 348 to 368; sequence TLMMFLVRISFFFTIMPLSIL. Residues 369-381 lie on the Cytoplasmic side of the membrane; it reads RSMLSKVVHSTEQ. A helical membrane pass occupies residues 382–402; that stretch reads GVLFACIAFLETLGGVTSTSA. At 403–415 the chain is on the extracellular side; it reads YNGIYSATVAWYP. A helical transmembrane segment spans residues 416 to 436; sequence GFVFLLSAGLLVLPAVSLCMV. The Cytoplasmic segment spans residues 437–461; that stretch reads KCIGWEEGSYTLLIHDEPSEHTSDS. A Tyrosine-based lysosomal-sorting motif motif is present at residues 446-449; that stretch reads YTLL.

This sequence belongs to the major facilitator superfamily. SLC46A family.

The protein resides in the lysosome membrane. It carries out the reaction estrone 3-sulfate(out) + n H(+)(out) = estrone 3-sulfate(in) + n H(+)(in). The catalysed reaction is 25-hydroxyvitamin D3 sulfate(out) + n H(+)(out) = 25-hydroxyvitamin D3 sulfate(in) + n H(+)(in). The enzyme catalyses cholate(out) + n H(+)(out) = cholate(in) + n H(+)(in). It catalyses the reaction glycocholate(out) + n H(+)(out) = glycocholate(in) + n H(+)(in). It carries out the reaction taurocholate(out) + n H(+)(out) = taurocholate(in) + n H(+)(in). The catalysed reaction is dehydroepiandrosterone 3-sulfate(out) + n H(+)(out) = dehydroepiandrosterone 3-sulfate(in) + n H(+)(in). The enzyme catalyses N-acetyl-D-muramoyl-L-alanyl-D-isoglutamine(out) + n H(+)(out) = N-acetyl-D-muramoyl-L-alanyl-D-isoglutamine(in) + n H(+)(in). It catalyses the reaction 2',3'-cGAMP(out) + n H(+)(out) = 2',3'-cGAMP(in) + n H(+)(in). Its function is as follows. Lysosomal proton-coupled steroid conjugate and bile acid transporter. Preferentially recognizes lipophilic steroid conjugates or bile acis as endogenous substrates and seems to mediate escape from lysosomes to the cytoplasm. Modulates hepatic cytosolic copper homeostasis, maybe acting as a lysosomal copper transporter and sequestering copper ions in the lysosome. Delivers pathogen-associated molecular patterns to cytosolic pattern recognition receptors as part of the innate immune response to microbes. Selectively transports bacterial muramyl dipeptide (MDP) into the cytosol for recognition by NOD2, triggering inflammatory responses. Likely acts as a redundant importer of cyclic GMP-AMP dinucleotides (cGAMPs) in monocyte and macrophage cell lineages. The transport mechanism, its electrogenicity and stoichiometry remain to be elucidated. The sequence is that of Lysosomal proton-coupled steroid conjugate and bile acid symporter SLC46A3 (Slc46a3) from Rattus norvegicus (Rat).